The sequence spans 403 residues: Digeranylgeranylglycerophospholipid reductase 1 (403 aa).

Residues alanine 14, aspartate 33, cysteine 44, alanine 45, glycine 47, arginine 98, valine 122, aspartate 277, glycine 289, and isoleucine 290 each coordinate FAD.

The protein belongs to the geranylgeranyl reductase family. DGGGPL reductase subfamily. FAD is required as a cofactor.

The catalysed reaction is a 2,3-bis-O-phytanyl-sn-glycerol 1-phospholipid + 8 A = a 2,3-bis-O-(geranylgeranyl)-sn-glycerol 1-phospholipid + 8 AH2. It catalyses the reaction 2,3-bis-O-(phytanyl)-sn-glycerol 1-phosphate + 8 A = 2,3-bis-O-(geranylgeranyl)-sn-glycerol 1-phosphate + 8 AH2. The enzyme catalyses CDP-2,3-bis-O-(geranylgeranyl)-sn-glycerol + 8 AH2 = CDP-2,3-bis-O-(phytanyl)-sn-glycerol + 8 A. It carries out the reaction archaetidylserine + 8 AH2 = 2,3-bis-O-phytanyl-sn-glycero-3-phospho-L-serine + 8 A. It functions in the pathway membrane lipid metabolism; glycerophospholipid metabolism. Functionally, is involved in the reduction of 2,3-digeranylgeranylglycerophospholipids (unsaturated archaeols) into 2,3-diphytanylglycerophospholipids (saturated archaeols) in the biosynthesis of archaeal membrane lipids. Catalyzes the formation of archaetidic acid (2,3-di-O-phytanyl-sn-glyceryl phosphate) from 2,3-di-O-geranylgeranylglyceryl phosphate (DGGGP) via the hydrogenation of each double bond of the isoprenoid chains. Is also probably able to reduce double bonds of geranyl groups in CDP-2,3-bis-O-(geranylgeranyl)-sn-glycerol and archaetidylserine, thus acting at various stages in the biosynthesis of archaeal membrane lipids. This Methanosphaera stadtmanae (strain ATCC 43021 / DSM 3091 / JCM 11832 / MCB-3) protein is Digeranylgeranylglycerophospholipid reductase 1.